A 334-amino-acid polypeptide reads, in one-letter code: Tyrosine-protein kinase SRK3 (334 aa).

Residues 1-42 enclose the SH2 domain; that stretch reads IRTLDDGGFYMANRISFPTLQNLVSHYMMDADGLAQRLSRPC. One can recognise a Protein kinase domain in the interval 66 to 321; the sequence is IQLQRKLGQG…LKNLLEDYYV (256 aa). Residues 72–80 and Lys94 each bind ATP; that span reads LGQGNFGEV. The Proton acceptor role is filled by Asp186.

It belongs to the protein kinase superfamily. Tyr protein kinase family.

Its subcellular location is the cytoplasm. The catalysed reaction is L-tyrosyl-[protein] + ATP = O-phospho-L-tyrosyl-[protein] + ADP + H(+). The chain is Tyrosine-protein kinase SRK3 (SRK3) from Spongilla lacustris (Freshwater sponge).